Here is a 94-residue protein sequence, read N- to C-terminus: MLEVNTYFDGTVKSIAFQTATLPATVGVMAKGEYTFGTDCKEIMTVVSGELIVQLPNQEEWQTFIDGQTFEVEANQSFNLKVPVETAYLCKYIR.

Belongs to the nucleoside phosphorylase PpnP family.

The catalysed reaction is a purine D-ribonucleoside + phosphate = a purine nucleobase + alpha-D-ribose 1-phosphate. It catalyses the reaction adenosine + phosphate = alpha-D-ribose 1-phosphate + adenine. The enzyme catalyses cytidine + phosphate = cytosine + alpha-D-ribose 1-phosphate. It carries out the reaction guanosine + phosphate = alpha-D-ribose 1-phosphate + guanine. The catalysed reaction is inosine + phosphate = alpha-D-ribose 1-phosphate + hypoxanthine. It catalyses the reaction thymidine + phosphate = 2-deoxy-alpha-D-ribose 1-phosphate + thymine. The enzyme catalyses uridine + phosphate = alpha-D-ribose 1-phosphate + uracil. It carries out the reaction xanthosine + phosphate = alpha-D-ribose 1-phosphate + xanthine. Functionally, catalyzes the phosphorolysis of diverse nucleosides, yielding D-ribose 1-phosphate and the respective free bases. Can use uridine, adenosine, guanosine, cytidine, thymidine, inosine and xanthosine as substrates. Also catalyzes the reverse reactions. The polypeptide is Pyrimidine/purine nucleoside phosphorylase (Saccharophagus degradans (strain 2-40 / ATCC 43961 / DSM 17024)).